A 171-amino-acid polypeptide reads, in one-letter code: uncharacterized protein (171 aa).

Positions Thr56–Met83 are disordered. Residues Val57–Ala77 are compositionally biased toward polar residues. The J domain occupies Lys113 to Phe170.

This is an uncharacterized protein from Sinorhizobium sp.